The sequence spans 112 residues: MLPKNCTHLGECNSDCLTRSEIQALFREVINTLKHTMNTENVCAHMLDIVSFERIKEYIRANLGHYTVITDKCSKRKVCLHHKRIARLLGIKKIYHQEYKRVVSKVYKKQTW.

This sequence belongs to the baculoviridae LEF-11 family.

Involved in late/very late gene activation. The protein is Late expression factor 11 (LEF-11) of Helicoverpa zea (Corn earworm moth).